Reading from the N-terminus, the 436-residue chain is UDP-N-acetylmuramoylalanine--D-glutamate ligase (436 aa).

Residue 112–118 (GSNGKST) coordinates ATP.

It belongs to the MurCDEF family.

The protein localises to the cytoplasm. The catalysed reaction is UDP-N-acetyl-alpha-D-muramoyl-L-alanine + D-glutamate + ATP = UDP-N-acetyl-alpha-D-muramoyl-L-alanyl-D-glutamate + ADP + phosphate + H(+). The protein operates within cell wall biogenesis; peptidoglycan biosynthesis. Functionally, cell wall formation. Catalyzes the addition of glutamate to the nucleotide precursor UDP-N-acetylmuramoyl-L-alanine (UMA). The polypeptide is UDP-N-acetylmuramoylalanine--D-glutamate ligase (Photorhabdus laumondii subsp. laumondii (strain DSM 15139 / CIP 105565 / TT01) (Photorhabdus luminescens subsp. laumondii)).